We begin with the raw amino-acid sequence, 138 residues long: Small ribosomal subunit protein uS12m (138 aa).

The transit peptide at 1–29 directs the protein to the mitochondrion; that stretch reads MSWSGLLHGLNTSLTCGPALVPRLWATCS. The disordered stretch occupies residues 36 to 56; the sequence is MHRLGPPKRPPRKLGPTEGRP.

This sequence belongs to the universal ribosomal protein uS12 family. In terms of assembly, component of the mitochondrial small ribosomal subunit (mt-SSU). Mature mammalian 55S mitochondrial ribosomes consist of a small (28S) and a large (39S) subunit. The 28S small subunit contains a 12S ribosomal RNA (12S mt-rRNA) and 30 different proteins. The 39S large subunit contains a 16S rRNA (16S mt-rRNA), a copy of mitochondrial valine transfer RNA (mt-tRNA(Val)), which plays an integral structural role, and 52 different proteins.

It localises to the mitochondrion. The chain is Small ribosomal subunit protein uS12m (MRPS12) from Homo sapiens (Human).